The following is a 196-amino-acid chain: Chromophore lyase CpcT/CpeT (196 aa).

The protein belongs to the CpcT/CpeT biliprotein lyase family.

Covalently attaches a chromophore to Cys residue(s) of phycobiliproteins. This chain is Chromophore lyase CpcT/CpeT, found in Synechococcus sp. (strain WH8020).